A 397-amino-acid chain; its full sequence is ATP-dependent RNA helicase RhlB (397 aa).

Positions threonine 8–alanine 36 match the Q motif motif. Residues leucine 39–valine 219 form the Helicase ATP-binding domain. Residue alanine 52–threonine 59 participates in ATP binding. A DEAD box motif is present at residues aspartate 165–aspartate 168. In terms of domain architecture, Helicase C-terminal spans aspartate 242–valine 392.

This sequence belongs to the DEAD box helicase family. RhlB subfamily. In terms of assembly, component of the RNA degradosome, which is a multiprotein complex involved in RNA processing and mRNA degradation.

The protein localises to the cytoplasm. The catalysed reaction is ATP + H2O = ADP + phosphate + H(+). In terms of biological role, DEAD-box RNA helicase involved in RNA degradation. Has RNA-dependent ATPase activity and unwinds double-stranded RNA. This Pseudomonas syringae pv. tomato (strain ATCC BAA-871 / DC3000) protein is ATP-dependent RNA helicase RhlB.